Here is a 306-residue protein sequence, read N- to C-terminus: Ribonuclease HIII (306 aa).

The RNase H type-2 domain maps to 87–302 (WSVVGSDEVG…TKKAEALAKK (216 aa)). Residues D93, E94, and D196 each coordinate a divalent metal cation.

The protein belongs to the RNase HII family. RnhC subfamily. Mn(2+) serves as cofactor. Mg(2+) is required as a cofactor.

It is found in the cytoplasm. It carries out the reaction Endonucleolytic cleavage to 5'-phosphomonoester.. In terms of biological role, endonuclease that specifically degrades the RNA of RNA-DNA hybrids. In Exiguobacterium sibiricum (strain DSM 17290 / CCUG 55495 / CIP 109462 / JCM 13490 / 255-15), this protein is Ribonuclease HIII.